Here is a 168-residue protein sequence, read N- to C-terminus: Photosystem I assembly protein Ycf3 (168 aa).

TPR repeat units follow at residues 35-68, 72-105, and 120-153; these read AFTY…EIDP, SYIL…NPFL, and GEQA…TPGN.

Belongs to the Ycf3 family.

It localises to the plastid. The protein localises to the chloroplast thylakoid membrane. In terms of biological role, essential for the assembly of the photosystem I (PSI) complex. May act as a chaperone-like factor to guide the assembly of the PSI subunits. The chain is Photosystem I assembly protein Ycf3 from Illicium oligandrum (Star anise).